A 514-amino-acid chain; its full sequence is Protein nucleotidyltransferase YdiU (514 aa).

The ATP site is built by glycine 111, glycine 113, arginine 114, lysine 134, aspartate 146, glycine 147, arginine 197, and arginine 204. Aspartate 276 functions as the Proton acceptor in the catalytic mechanism. Mg(2+) contacts are provided by asparagine 277 and aspartate 286. Aspartate 286 provides a ligand contact to ATP.

The protein belongs to the SELO family. Requires Mg(2+) as cofactor. Mn(2+) serves as cofactor.

The enzyme catalyses L-seryl-[protein] + ATP = 3-O-(5'-adenylyl)-L-seryl-[protein] + diphosphate. It carries out the reaction L-threonyl-[protein] + ATP = 3-O-(5'-adenylyl)-L-threonyl-[protein] + diphosphate. The catalysed reaction is L-tyrosyl-[protein] + ATP = O-(5'-adenylyl)-L-tyrosyl-[protein] + diphosphate. It catalyses the reaction L-histidyl-[protein] + UTP = N(tele)-(5'-uridylyl)-L-histidyl-[protein] + diphosphate. The enzyme catalyses L-seryl-[protein] + UTP = O-(5'-uridylyl)-L-seryl-[protein] + diphosphate. It carries out the reaction L-tyrosyl-[protein] + UTP = O-(5'-uridylyl)-L-tyrosyl-[protein] + diphosphate. Nucleotidyltransferase involved in the post-translational modification of proteins. It can catalyze the addition of adenosine monophosphate (AMP) or uridine monophosphate (UMP) to a protein, resulting in modifications known as AMPylation and UMPylation. The protein is Protein nucleotidyltransferase YdiU of Rhodococcus jostii (strain RHA1).